A 1758-amino-acid polypeptide reads, in one-letter code: Condensin-2 complex subunit hcp-6 (1758 aa).

Disordered regions lie at residues 428-501 (DPGA…KAKE), 969-1008 (ENGS…KGGM), 1379-1460 (QKRL…ARLL), and 1500-1656 (SKQA…LSRG). Over residues 438-462 (EQNEEEDEEEEGEDEEEEEENEQDD) the composition is skewed to acidic residues. Positions 463-473 (VAVKEEEQSDK) are enriched in basic and acidic residues. The segment covering 474 to 484 (SDEENDGDNEE) has biased composition (acidic residues). Residues 485–501 (NVSKKKEEKKKEKKAKE) show a composition bias toward basic and acidic residues. Residues 969–979 (ENGSSDASTVN) show a composition bias toward polar residues. Low complexity predominate over residues 999 to 1008 (SSQKSSKGGM). Residues 1326-1385 (CIEHKNDIDEILQDNRQLKDEMMFELQRVKQRTEEANRILDEYLKRVAEFKKQQKRLSKS) adopt a coiled-coil conformation. The segment covering 1414–1423 (EDQENVEEEV) has biased composition (acidic residues). Basic and acidic residues-rich tracts occupy residues 1424–1437 (EMRT…DADV) and 1500–1512 (SKQA…KTIV). Polar residues-rich tracts occupy residues 1602 to 1618 (ISAN…QSTE) and 1640 to 1651 (VPTSSSGNTEND).

Component of the condensin-2 complex.

The protein resides in the nucleus. It is found in the chromosome. It localises to the centromere. Chromosomal protein which is recruited to mitotic chromosomes by hcp-3 (CENP-A) and hcp-4 (CENP-C). Involved in chromosome segregation during mitosis, playing a role in chromosome condensation and in maintaining chromosome morphology, rigidity and orientation during mitosis. The sequence is that of Condensin-2 complex subunit hcp-6 from Caenorhabditis elegans.